A 337-amino-acid chain; its full sequence is DNA-directed RNA polymerase subunit alpha (337 aa).

The alpha N-terminal domain (alpha-NTD) stretch occupies residues 1–233 (MVREKVKVST…NLFIPFLHVE (233 aa)). An alpha C-terminal domain (alpha-CTD) region spans residues 267–337 (LAFQYIFIDQ…IEKAFQKKID (71 aa)).

This sequence belongs to the RNA polymerase alpha chain family. As to quaternary structure, in plastids the minimal PEP RNA polymerase catalytic core is composed of four subunits: alpha, beta, beta', and beta''. When a (nuclear-encoded) sigma factor is associated with the core the holoenzyme is formed, which can initiate transcription.

The protein resides in the plastid. It is found in the chloroplast. It carries out the reaction RNA(n) + a ribonucleoside 5'-triphosphate = RNA(n+1) + diphosphate. In terms of biological role, DNA-dependent RNA polymerase catalyzes the transcription of DNA into RNA using the four ribonucleoside triphosphates as substrates. This is DNA-directed RNA polymerase subunit alpha from Arabis hirsuta (Hairy rock-cress).